The primary structure comprises 142 residues: Nucleoside diphosphate kinase (142 aa).

The ATP site is built by K11, F59, R87, T93, R104, and N114. H117 acts as the Pros-phosphohistidine intermediate in catalysis.

This sequence belongs to the NDK family. Homotetramer. Mg(2+) is required as a cofactor.

It localises to the cytoplasm. The catalysed reaction is a 2'-deoxyribonucleoside 5'-diphosphate + ATP = a 2'-deoxyribonucleoside 5'-triphosphate + ADP. It catalyses the reaction a ribonucleoside 5'-diphosphate + ATP = a ribonucleoside 5'-triphosphate + ADP. Functionally, major role in the synthesis of nucleoside triphosphates other than ATP. The ATP gamma phosphate is transferred to the NDP beta phosphate via a ping-pong mechanism, using a phosphorylated active-site intermediate. This is Nucleoside diphosphate kinase from Yersinia pseudotuberculosis serotype O:1b (strain IP 31758).